We begin with the raw amino-acid sequence, 372 residues long: Queuine tRNA-ribosyltransferase (372 aa).

Asp92 (proton acceptor) is an active-site residue. Residues 92–96, Asp146, Gln188, and Gly215 contribute to the substrate site; that span reads DSGGF. The interval 246 to 252 is RNA binding; that stretch reads GIGTLRE. Asp265 functions as the Nucleophile in the catalytic mechanism. Residues 270 to 274 form an RNA binding; important for wobble base 34 recognition region; sequence TRLGR. Residues Cys303, Cys305, Cys308, and His334 each coordinate Zn(2+).

It belongs to the queuine tRNA-ribosyltransferase family. Homodimer. Within each dimer, one monomer is responsible for RNA recognition and catalysis, while the other monomer binds to the replacement base PreQ1. Requires Zn(2+) as cofactor.

It carries out the reaction 7-aminomethyl-7-carbaguanine + guanosine(34) in tRNA = 7-aminomethyl-7-carbaguanosine(34) in tRNA + guanine. It functions in the pathway tRNA modification; tRNA-queuosine biosynthesis. Its function is as follows. Catalyzes the base-exchange of a guanine (G) residue with the queuine precursor 7-aminomethyl-7-deazaguanine (PreQ1) at position 34 (anticodon wobble position) in tRNAs with GU(N) anticodons (tRNA-Asp, -Asn, -His and -Tyr). Catalysis occurs through a double-displacement mechanism. The nucleophile active site attacks the C1' of nucleotide 34 to detach the guanine base from the RNA, forming a covalent enzyme-RNA intermediate. The proton acceptor active site deprotonates the incoming PreQ1, allowing a nucleophilic attack on the C1' of the ribose to form the product. After dissociation, two additional enzymatic reactions on the tRNA convert PreQ1 to queuine (Q), resulting in the hypermodified nucleoside queuosine (7-(((4,5-cis-dihydroxy-2-cyclopenten-1-yl)amino)methyl)-7-deazaguanosine). This is Queuine tRNA-ribosyltransferase from Synechococcus sp. (strain CC9902).